Here is a 131-residue protein sequence, read N- to C-terminus: Small ribosomal subunit protein uS8 (131 aa).

It belongs to the universal ribosomal protein uS8 family. Part of the 30S ribosomal subunit. Contacts proteins S5 and S12.

One of the primary rRNA binding proteins, it binds directly to 16S rRNA central domain where it helps coordinate assembly of the platform of the 30S subunit. In Zymomonas mobilis subsp. mobilis (strain ATCC 31821 / ZM4 / CP4), this protein is Small ribosomal subunit protein uS8.